Consider the following 185-residue polypeptide: Elongation factor P (185 aa).

This sequence belongs to the elongation factor P family.

The protein localises to the cytoplasm. It participates in protein biosynthesis; polypeptide chain elongation. Its function is as follows. Involved in peptide bond synthesis. Stimulates efficient translation and peptide-bond synthesis on native or reconstituted 70S ribosomes in vitro. Probably functions indirectly by altering the affinity of the ribosome for aminoacyl-tRNA, thus increasing their reactivity as acceptors for peptidyl transferase. This chain is Elongation factor P, found in Bordetella bronchiseptica (strain ATCC BAA-588 / NCTC 13252 / RB50) (Alcaligenes bronchisepticus).